The following is a 229-amino-acid chain: MAVEFDEETMQELYTWVDTIPLSRPKRNIARDFSDGVLTAELVKFYFPKLVEMHNYVPANSTTQKLSNWTILNRKVLSKLSFSVPDDVIRKIVQCSPGVVELVLNTLRQKIEEKQRLHHISADLSQDQATQNNGNTHSDKGYKSNGTELSPRQGARVDPASKTHQGYAQAANADTTLRFQLAEKEQTLILSQETIQILQAKLRRLEQLLLLKNVRIDDLTRRLQELEKK.

One can recognise a Calponin-homology (CH) domain in the interval 7-115; it reads EETMQELYTW…TLRQKIEEKQ (109 aa). The segment at 122–169 is disordered; it reads ADLSQDQATQNNGNTHSDKGYKSNGTELSPRQGARVDPASKTHQGYAQ. The segment covering 123–136 has biased composition (polar residues); it reads DLSQDQATQNNGNT. The tract at residues 178 to 229 is essential for homodimerization and microtubule bundling activity; that stretch reads RFQLAEKEQTLILSQETIQILQAKLRRLEQLLLLKNVRIDDLTRRLQELEKK.

As to quaternary structure, homodimer.

It localises to the cytoplasm. The protein resides in the cytoskeleton. It is found in the cilium axoneme. The protein localises to the apical cell membrane. Microtubule-associated protein involved in the stabilization of microtubules along the axis of migration during radial intercalation. Promotes the establishment and stabilization of an axis of microtubules required for the active migration of cells into the outer epithelium. Microtubule-associated protein that promotes microtubule bundling and stabilizes microtubules against depolymerization in response to cold shock. Essential for ciliary central apparatus formation which requires both its microtubule-binding and bundling activities. Regulates planar cell polarity signaling pathway and asymmetric microtubule accumulation in ciliated epithelia. The polypeptide is Sperm flagellar protein 1 (Xenopus laevis (African clawed frog)).